We begin with the raw amino-acid sequence, 204 residues long: MPKFFCDYCDVYLTHDSMSVRKAHNSGRNHLRNVVDYYQQIGHEKAQSVIDSITSSYAAEGQAHANPMLPQNQPGQGFPPPPFGFPGGIPPPFPGMPGAPPGQFPQGMPPPPGGGRGMPPMPPFPPGPNGMPVPPNGLPFPPPGGFPFPPPGAPGAPGAPGASGGAPPPFPGLPGMPPPGQGFPPGGPPGFAPPGAGAPGHEKR.

The segment at 4-36 (FFCDYCDVYLTHDSMSVRKAHNSGRNHLRNVVD) adopts a Matrin-type zinc-finger fold. The interval 65–204 (ANPMLPQNQP…GAGAPGHEKR (140 aa)) is disordered. Pro residues-rich tracts occupy residues 77–154 (GFPP…PGAP) and 166–192 (APPPFPGLPGMPPPGQGFPPGGPPGFA).

This sequence belongs to the U1 small nuclear ribonucleoprotein C family. As to quaternary structure, U1 snRNP is composed of the 7 core Sm proteins B/B', D1, D2, D3, E, F and G that assemble in a heptameric protein ring on the Sm site of the small nuclear RNA to form the core snRNP, and at least 3 U1 snRNP-specific proteins U1-70K, U1-A and U1-C. U1-C interacts with U1 snRNA and the 5' splice-site region of the pre-mRNA.

It is found in the nucleus. Its function is as follows. Component of the spliceosomal U1 snRNP, which is essential for recognition of the pre-mRNA 5' splice-site and the subsequent assembly of the spliceosome. U1-C is directly involved in initial 5' splice-site recognition for both constitutive and regulated alternative splicing. The interaction with the 5' splice-site seems to precede base-pairing between the pre-mRNA and the U1 snRNA. Stimulates commitment or early (E) complex formation by stabilizing the base pairing of the 5' end of the U1 snRNA and the 5' splice-site region. The protein is U1 small nuclear ribonucleoprotein C of Fusarium vanettenii (strain ATCC MYA-4622 / CBS 123669 / FGSC 9596 / NRRL 45880 / 77-13-4) (Fusarium solani subsp. pisi).